We begin with the raw amino-acid sequence, 223 residues long: Ribose-5-phosphate isomerase A (223 aa).

Substrate-binding positions include 32-35 (TGST), 85-88 (DGAD), and 98-101 (KGGG). Catalysis depends on Glu-107, which acts as the Proton acceptor. Lys-125 lines the substrate pocket.

It belongs to the ribose 5-phosphate isomerase family. As to quaternary structure, homodimer.

It catalyses the reaction aldehydo-D-ribose 5-phosphate = D-ribulose 5-phosphate. Its pathway is carbohydrate degradation; pentose phosphate pathway; D-ribose 5-phosphate from D-ribulose 5-phosphate (non-oxidative stage): step 1/1. Catalyzes the reversible conversion of ribose-5-phosphate to ribulose 5-phosphate. This Pseudomonas paraeruginosa (strain DSM 24068 / PA7) (Pseudomonas aeruginosa (strain PA7)) protein is Ribose-5-phosphate isomerase A.